The following is a 197-amino-acid chain: Imidazoleglycerol-phosphate dehydratase (197 aa).

It belongs to the imidazoleglycerol-phosphate dehydratase family.

It is found in the cytoplasm. It carries out the reaction D-erythro-1-(imidazol-4-yl)glycerol 3-phosphate = 3-(imidazol-4-yl)-2-oxopropyl phosphate + H2O. The protein operates within amino-acid biosynthesis; L-histidine biosynthesis; L-histidine from 5-phospho-alpha-D-ribose 1-diphosphate: step 6/9. In Pseudomonas entomophila (strain L48), this protein is Imidazoleglycerol-phosphate dehydratase.